A 207-amino-acid chain; its full sequence is Small ribosomal subunit protein uS4 (207 aa).

Residues 31-55 (KCKLDSKPGQHGRTSGARTSDYGTQ) are disordered. Over residues 42 to 53 (GRTSGARTSDYG) the composition is skewed to polar residues. The S4 RNA-binding domain occupies 97 to 157 (SRLDNVVYRM…EQKKKQARIL (61 aa)).

It belongs to the universal ribosomal protein uS4 family. In terms of assembly, part of the 30S ribosomal subunit. Contacts protein S5. The interaction surface between S4 and S5 is involved in control of translational fidelity.

In terms of biological role, one of the primary rRNA binding proteins, it binds directly to 16S rRNA where it nucleates assembly of the body of the 30S subunit. Its function is as follows. With S5 and S12 plays an important role in translational accuracy. This is Small ribosomal subunit protein uS4 from Paraburkholderia xenovorans (strain LB400).